The sequence spans 867 residues: Nitrate reductase [NADPH] (867 aa).

Residues 38-58 form a disordered region; sequence DIPLPPPSKEPTEVLSIDKPT. Mo-molybdopterin is bound at residue Cys152. Residues 514–589 form the Cytochrome b5 heme-binding domain; it reads NRIIDLQEFK…MPDYHIGTMD (76 aa). The heme site is built by His549 and His572. In terms of domain architecture, FAD-binding FR-type spans 615–726; that stretch reads KSWTKATLVK…KGPTGRFEYL (112 aa). Residues 669–672, 686–690, Phe691, 700–702, and Thr753 contribute to the FAD site; these read RSYT, LVKIY, and KMT. 837–846 is an NADP(+) binding site; the sequence is MVLICGPEAM.

The protein belongs to the nitrate reductase family. Homodimer. The cofactor is FAD. Heme serves as cofactor. Mo-molybdopterin is required as a cofactor.

The catalysed reaction is nitrite + NADP(+) + H2O = nitrate + NADPH + H(+). Functionally, nitrate reductase is a key enzyme involved in the first step of nitrate assimilation in plants, fungi and bacteria. In Aspergillus niger, this protein is Nitrate reductase [NADPH] (niaD).